The primary structure comprises 110 residues: Small ribosomal subunit protein bS16 (110 aa).

Residues 84 to 110 (KRTARNNPEKAVPRKERKAQAEAAAKS) form a disordered region. Residues 90–103 (NPEKAVPRKERKAQ) show a composition bias toward basic and acidic residues.

It belongs to the bacterial ribosomal protein bS16 family.

The polypeptide is Small ribosomal subunit protein bS16 (Nitrobacter hamburgensis (strain DSM 10229 / NCIMB 13809 / X14)).